A 1210-amino-acid chain; its full sequence is MPRTSRNVRATEVATTAIPPSNAATDTTVDTTVAPTIASADAAQHASNISSSQLGPAGVSDKVPSSVVTNDGDISVTPISENAAQLASSNQPASVIRNPVAAATISIVNPSSLRCQQCGAKFSSMTQLAEHVRTEHRTGAGSLVTSPAINQAIESWLLTWEDLRLLAPTIATDALNKYMGEAVAKAPLLIVEDEGLCTSFLASDTISIAGLQREIVGFTWFMETLQMIPALPEGAVNHPICHTGWASKDSVSRHLDVRLSPPTHGGCFSIHYRTVEGIRQGHAIQPSYFPCQRPHAGPQVRSVQSQDQQVYSVDSGPDPRSRGRYVRFFDNKELFAVAYPGREVLMEANRNALFLDESLPDRVGCIGRAQNVSGDVSAHIDTYELCDDLTLAIREMYHNMLFSMHLDPASVMEIVQDVSQQLVAASIPFAQTDTILCPWAASTPTLQLSQVLNLLNVANNTSAALPLIEAAATLIMGITPLRMEPRILSEAIKRVPETTTIVPSPTGELTRLLKPLGNDYSAIYRCIAGCLYSGLVQMFISADAYPDPTQSITSIPAIWKSLIVMLAAPMTTDPHAAVKAFMSMANLLAQPEPIIIPAPGMTQSTPAVQFSHPEVWPPGFVDPTTLDRNRTPLLHALATMIHAHWPQPGVIQYGRSRLGSANLFLPANQLTYPWPTQPLPRITVGPTYDSAMFRWIDSVFGFYINVVNSRYVATIVGDTTRRTLTGLMAALMQVKTMTPFYIERMCPTEVAVVGGVTVFPPFQVPITRLDPTQVITNVMVSPRGPPAPCRRSRRSHRYYAYAAPIPCQSIPLRLSLLCCVRQTEATLGPSYHYGSAITPMFLSEELFTRNQRAVIASEAFVCARSIIAQCVPDGFQVPRPLQDFNQYNASGSTAADLLKAVDDMFKTAFDIDGSLIEGIGLYGDPRVADLSVAYLRQNGAVERVHTAPDSSFLHEAMQVTSQVMVNEPNLWAIARGDIILAQNATHNNWDPLNPVGLPIFARGGPNVHVVGSRGMIIPQPGGLAPMIRDDAGNPQQIEGDWIYPISVLQVSVANFRDHVWPMIQAGRTRVRIEMGHFLYSIHYHEPFGQITEAPAIDTWLAGISPTGIPPFPLSAPIPQITIPITARRVYFGYCTMNNTGATFSTLGAAIQSAWGTDVTIQRNRWPALIDPNYIPGQSQLPARVQLYNPLRRYNYRYPSLKGMLYIPGVE.

Residues 1–28 (MPRTSRNVRATEVATTAIPPSNAATDTT) form a disordered region. The C2H2-type zinc finger occupies 113 to 136 (LRCQQCGAKFSSMTQLAEHVRTEH). A disordered region spans residues 294 to 319 (PHAGPQVRSVQSQDQQVYSVDSGPDP). Over residues 299 to 315 (QVRSVQSQDQQVYSVDS) the composition is skewed to low complexity.

This sequence belongs to the turreted BTV-fold inner capsid family. As to quaternary structure, homodecamer; each decamer is made up of two conformers of VP2, called VP2A and VP2B. 12 homodecamers assemble to form an icosahedral capsid. Interacts with VP6.

It is found in the virion. In terms of biological role, inner capsid protein that self-assembles to form an icosahedral capsid with a T=2 symmetry, which consists of 120 copies of VP2, with channels at each of its five-fold vertices. This capsid constitutes the innermost concentric layer of the viral mature particle. This Aquareovirus A (isolate Chum salmon/Japan/CSRV/1981) (AQRV-A) protein is Inner capsid protein VP3 (S3).